The following is a 238-amino-acid chain: Ribonuclease 3 (238 aa).

Residues Ile4–Gly130 form the RNase III domain. Glu45 contributes to the Mg(2+) binding site. Residue Asp49 is part of the active site. Positions 116 and 119 each coordinate Mg(2+). The active site involves Glu119. Positions Asp154–Lys222 constitute a DRBM domain. The disordered stretch occupies residues Gln215–Gln238. Over residues Lys222–Gln238 the composition is skewed to basic and acidic residues.

Belongs to the ribonuclease III family. Homodimer. Mg(2+) serves as cofactor.

It localises to the cytoplasm. The catalysed reaction is Endonucleolytic cleavage to 5'-phosphomonoester.. Its function is as follows. Digests double-stranded RNA. Involved in the processing of primary rRNA transcript to yield the immediate precursors to the large and small rRNAs (23S and 16S). Processes some mRNAs, and tRNAs when they are encoded in the rRNA operon. Processes pre-crRNA and tracrRNA of type II CRISPR loci if present in the organism. The protein is Ribonuclease 3 of Onion yellows phytoplasma (strain OY-M).